We begin with the raw amino-acid sequence, 422 residues long: Adenosylhomocysteinase (422 aa).

Positions 129 and 154 each coordinate substrate. Residue 155-157 (TTT) coordinates NAD(+). Substrate contacts are provided by Lys184 and Asp188. NAD(+)-binding positions include Asn189, 218 to 223 (GYGWCG), Glu241, Asn276, 297 to 299 (AGH), and Asn344.

The protein belongs to the adenosylhomocysteinase family. The cofactor is NAD(+).

It localises to the cytoplasm. It carries out the reaction S-adenosyl-L-homocysteine + H2O = L-homocysteine + adenosine. It functions in the pathway amino-acid biosynthesis; L-homocysteine biosynthesis; L-homocysteine from S-adenosyl-L-homocysteine: step 1/1. In terms of biological role, may play a key role in the regulation of the intracellular concentration of adenosylhomocysteine. The chain is Adenosylhomocysteinase from Pyrococcus abyssi (strain GE5 / Orsay).